The chain runs to 66 residues: Large ribosomal subunit protein uL30 (66 aa).

Belongs to the universal ribosomal protein uL30 family. As to quaternary structure, part of the 50S ribosomal subunit.

The chain is Large ribosomal subunit protein uL30 from Chloroherpeton thalassium (strain ATCC 35110 / GB-78).